The sequence spans 1330 residues: Paired amphipathic helix protein Sin3-like 3 (1330 aa).

PAH domains lie at 8-78 and 94-164; these read QKLT…LPKG and KRVE…LPDT. Positions 191–246 are enriched in basic and acidic residues; it reads IITPHPDHDYGTEHIDQDRERPIKKENKEHMRGTNKENEHRDARDFEPHSKKEQFL. Residues 191–281 are disordered; it reads IITPHPDHDY…VPSSSTYDEK (91 aa). A compositionally biased stretch (polar residues) spans 262 to 277; the sequence is ISNQSKLSGAVPSSST. Positions 283-351 constitute a PAH 3 domain; that stretch reads AMKSYSQDLA…DSFIEFLVQC (69 aa). 5 disordered regions span residues 373–401, 718–775, 789–808, 882–906, and 920–1002; these read GEGK…DRDH, NQNV…GRTS, KNVV…SIER, QEMA…FEED, and SKAN…EAEC. Basic and acidic residues predominate over residues 383 to 401; sequence DNDRDQEHKRDDGLRDRDH. Positions 723 to 734 are enriched in low complexity; the sequence is SGSSSAGESEGS. Residues 789–800 show a composition bias toward basic and acidic residues; that stretch reads KNVVTSDEKPES. The span at 920 to 932 shows a compositional bias: polar residues; that stretch reads SKANDSTGNNISG. Basic and acidic residues-rich tracts occupy residues 933–949 and 956–968; these read DRSR…RAEN and NAAR…RNEY. Acidic residues predominate over residues 980-989; it reads GGEDPEDDLD. Serine 996 bears the Phosphoserine mark.

Interacts with ERF7 and the histone deacetylase HDA19.

It localises to the nucleus. Acts as a transcriptional repressor. Interacts with ERF7 to repress genes in abscisic acid and drought stress responses. The heterodimer represses transcription by tethering SNL3 to DNA. The sequence is that of Paired amphipathic helix protein Sin3-like 3 (SNL3) from Arabidopsis thaliana (Mouse-ear cress).